The sequence spans 511 residues: Aldehyde dehydrogenase 2, mitochondrial (511 aa).

A mitochondrion-targeting transit peptide spans 1–21; the sequence is MSKSKTKTDKRNQSSLSRIKL. The disordered stretch occupies residues 72 to 92; the sequence is VSEKSQHDSTEEDITQVSEKS. 274–279 contributes to the NAD(+) binding site; that stretch reads GSTLVG. The active-site Proton acceptor is the glutamate 297. Residue cysteine 331 is the Nucleophile of the active site.

The protein belongs to the aldehyde dehydrogenase family.

It localises to the mitochondrion matrix. The enzyme catalyses an aldehyde + NAD(+) + H2O = a carboxylate + NADH + 2 H(+). It functions in the pathway alcohol metabolism; ethanol degradation; acetate from ethanol: step 2/2. This Saccharomyces cerevisiae (Baker's yeast) protein is Aldehyde dehydrogenase 2, mitochondrial (ALD2).